The chain runs to 129 residues: Small ribosomal subunit protein uS11 (129 aa).

This sequence belongs to the universal ribosomal protein uS11 family. In terms of assembly, part of the 30S ribosomal subunit. Interacts with proteins S7 and S18. Binds to IF-3.

Functionally, located on the platform of the 30S subunit, it bridges several disparate RNA helices of the 16S rRNA. Forms part of the Shine-Dalgarno cleft in the 70S ribosome. The protein is Small ribosomal subunit protein uS11 of Buchnera aphidicola subsp. Baizongia pistaciae (strain Bp).